The primary structure comprises 1214 residues: Delta-latroinsectotoxin-Lt1a (1214 aa).

The tract at residues 64 to 89 (IGSIPVIGEVVGIVTAPIAIVSHITS) is helix H2 is the probable transmembrane region of the tetrameric pore inserted in the target cell membrane. Residues 250–269 (ALYALFYGTQTYAAVMFFLL) form a helix H8 is the probable transmembrane region of the tetrameric pore inserted in the target cell membrane region. ANK repeat units lie at residues 464–497 (DIHR…DIEA), 501–532 (NDRS…DIEL), 536–565 (NGFT…DVNA), 570–600 (TNLT…KVNE), 604–633 (DGFT…DKNA), 637–666 (SGLT…DLNI), 670–699 (NHMA…KVSI), 706–734 (NNWT…DINL), 740–769 (GNLT…NIEE), 773–802 (EGYT…DIEA), 806–835 (DNLT…DIGA), 839–868 (DGST…NLKE), 872–901 (NKYL…SLKD), 906–936 (EGRT…TLDE), and 966–994 (VKPT…PEGS). The propeptide at 1020–1214 (IVKETNSRYL…IDVHQKMFLR (195 aa)) is C-terminal domain cleavage is required for toxin activation.

It belongs to the cationic peptide 01 (latrotoxin) family. 04 (delta-latroinsectotoxin) subfamily. As to quaternary structure, homotetramer in membrane. As to expression, expressed by the venom gland.

It localises to the secreted. Its subcellular location is the target cell membrane. Insecticidal presynaptic neurotoxin that induces massive neurotransmitter release at insect (but not vertebrate) neuromuscular junctions. Native toxin forms cation-permeable pores (with high permeability to calcium) in lipid membranes locust muscle membrane and artificial lipid bilayers. May bind to insect neurexin-1 homolog, insect adhesion G protein-coupled receptor L1 homolog, and insect receptor-type tyrosine-protein phosphatase S homolog, and induces neurotransmitter exocytosis both by forming tetrameric pores in membranes and signaling via G protein-coupled receptor. Oligomerization is a process independent of divalent cations. The sequence is that of Delta-latroinsectotoxin-Lt1a from Latrodectus tredecimguttatus (Mediterranean black widow spider).